A 625-amino-acid polypeptide reads, in one-letter code: MAAEKQIPGGGSGGGGSGSGGGGGGSGGGRSAGGDENKENERPSAGSKANKEFGDSLSLEILQIIKESQQQHGLRHGDFQRYRGYCSRRQRRLRKTLNFKMGNRHKFTGKKVTEELLTDNRYLLLVLMDAERAWSYAMQLKQEANTEPRKRFHLLSRLRKAVKHAEELERLCESNRVDAKTKLEAQAYTAYLSGMLRFEHQEWKSAIEAFNKCKTIYEKLASAFTEEQAVLYNQRVEEISPNIRYCAYNIGDQSAINELMQMRLRSGGTEGLLAEKLEALITQTRAKQAATMSEVEWRGRTVPVKIDKVRIFLLGLADNEAAIVQAESEETKERLFESMLSECRDALQAVREELKPDQKQRDYALDGESGKVSNLQYLHSYLTYIKLSTAIRRNENMAKGLHRALLQQQPEDDSKRSPRPQDLIRLYDIILQNLVELLQLPGLEEDRTFQKEISLKTLVFKAYRCFFIAQSYVLVKKWSEALVLYDRVLKYANEVSSHGGASKNSLKDLPDVQELITQVRSEKCSLQAAAILDANDSHQTDTSSQVKDNTPLVERFESFCLDPSLVTKQANLVHFPPGFQPIPCKPLFFDLALNHVAFPPLEDKLEQKTKSGLTGYIKGIFGFRS.

The disordered stretch occupies residues methionine 1–glutamate 52. The segment covering proline 8–alanine 32 has biased composition (gly residues). The span at glycine 33–arginine 42 shows a compositional bias: basic and acidic residues. Phosphoserine is present on residues serine 47 and serine 240. An RNA-binding region spans residues lysine 51–glycine 251. The residue at position 451 (lysine 451) is an N6-acetyllysine. The interval proline 586–lysine 608 is required for interaction with SRP72.

This sequence belongs to the SRP68 family. Heterodimer with SRP72. SRP68/SRP72 heterodimer formation is stabilized by the presence of 7SL RNA. Component of a signal recognition particle (SRP) complex that consists of a 7SL RNA molecule of 300 nucleotides and six protein subunits: SRP72, SRP68, SRP54, SRP19, SRP14 and SRP9. Within the SRP complex, interacts (via C-terminus) with SRP72 (via N-terminus).

The protein resides in the cytoplasm. It localises to the nucleus. The protein localises to the nucleolus. It is found in the endoplasmic reticulum. In terms of biological role, component of the signal recognition particle (SRP) complex, a ribonucleoprotein complex that mediates the cotranslational targeting of secretory and membrane proteins to the endoplasmic reticulum (ER). The SRP complex interacts with the signal sequence in nascent secretory and membrane proteins and directs them to the membrane of the ER. The SRP complex targets the ribosome-nascent chain complex to the SRP receptor (SR), which is anchored in the ER, where SR compaction and GTPase rearrangement drive cotranslational protein translocation into the ER. Binds the signal recognition particle RNA (7SL RNA), SRP72 binds to this complex subsequently. The SRP complex possibly participates in the elongation arrest function. In Mus musculus (Mouse), this protein is Signal recognition particle subunit SRP68 (Srp68).